A 454-amino-acid polypeptide reads, in one-letter code: DNA primase small subunit (454 aa).

Active-site residues include Glu-66, Asp-131, and Asp-133. Mg(2+) contacts are provided by Asp-131 and Asp-133. Mn(2+) contacts are provided by Asp-131 and Asp-133. Residue 131–133 (DID) participates in a ribonucleoside 5'-triphosphate binding. The Zn(2+) site is built by Cys-143, Cys-144, Cys-150, and Cys-153. Positions 143–153 (CCSKTNICEKC) match the Zinc knuckle motif motif. 182-188 (SGRRGIH) lines the a ribonucleoside 5'-triphosphate pocket. Asp-333 lines the Mg(2+) pocket. Asp-333 lines the Mn(2+) pocket. 342 to 345 (HLLK) provides a ligand contact to a ribonucleoside 5'-triphosphate. The tract at residues 385–420 (DKNSQNDNGHGPTMETNTTENQKDNARGQSNKGHGF) is disordered. Composition is skewed to polar residues over residues 389 to 404 (QNDN…NTTE) and 411 to 420 (RGQSNKGHGF).

It belongs to the eukaryotic-type primase small subunit family. In terms of assembly, heterodimer of a catalytic subunit spp1/pri1 and a regulatory subunit spp2/pri2, also known as the DNA primase complex. Component of the alpha DNA polymerase complex (also known as the alpha DNA polymerase-primase complex) consisting of four subunits: the catalytic subunit pol1, the accessory subunit spb70/pol12, and the primase complex subunits spp1/pri1 and spp2/pri2 respectively. Mg(2+) is required as a cofactor. The cofactor is Mn(2+).

The protein localises to the nucleus. It catalyses the reaction ssDNA + n NTP = ssDNA/pppN(pN)n-1 hybrid + (n-1) diphosphate.. In terms of biological role, catalytic subunit of the DNA primase complex and component of the DNA polymerase alpha complex (also known as the alpha DNA polymerase-primase complex - primosome/replisome) which play an essential role in the initiation of DNA synthesis. During the S phase of the cell cycle, the DNA polymerase alpha complex (composed of a catalytic subunit pol1, an accessory subunit spb70/pol12 and two primase subunits, the catalytic subunit spp1/pri1 and the regulatory subunit spp2/pri2) is recruited to DNA at the replicative forks. The primase subunit of the polymerase alpha complex initiates DNA synthesis by oligomerising short RNA primers on both leading and lagging strands. The polypeptide is DNA primase small subunit (Schizosaccharomyces pombe (strain 972 / ATCC 24843) (Fission yeast)).